Consider the following 558-residue polypeptide: Putative polypeptide N-acetylgalactosaminyltransferase 13 (558 aa).

Over 1–12 the chain is Cytoplasmic; that stretch reads MHAGGKYCGPRH. The helical; Signal-anchor for type II membrane protein transmembrane segment at 13–32 threads the bilayer; the sequence is CSFYIIAFLICQLFFLVIFI. The Lumenal segment spans residues 33–558; that stretch reads RNDDASSANE…QFALEMEGQT (526 aa). N-linked (GlcNAc...) asparagine glycans are attached at residues Asn48 and Asn111. 4 disulfides stabilise this stretch: Cys97–Cys335, Cys326–Cys412, Cys445–Cys460, and Cys484–Cys498. Residues 109 to 225 are catalytic subdomain A; that stretch reads EANVSVVISF…EGWLEPLLER (117 aa). Residues Asp150 and Arg186 each contribute to the substrate site. Asp209 serves as a coordination point for Mn(2+). Ser210 is a binding site for substrate. His211 contacts Mn(2+). Residues 281-343 are catalytic subdomain B; that stretch reads PYQSPAFAGG…PCSRIGHIFR (63 aa). Trp312 serves as a coordination point for substrate. A Mn(2+)-binding site is contributed by His340. The substrate site is built by Arg343 and His346. The Ricin B-type lectin domain maps to 422–556; that stretch reads VSPELRMHFD…SFQFALEMEG (135 aa). A glycan (N-linked (GlcNAc...) asparagine) is linked at Asn501. An intrachain disulfide couples Cys525 to Cys539.

It belongs to the glycosyltransferase 2 family. GalNAc-T subfamily. Mn(2+) serves as cofactor. In terms of tissue distribution, during embryonic stages 16-17, very weak expression in the midgut.

It is found in the golgi apparatus membrane. The enzyme catalyses L-seryl-[protein] + UDP-N-acetyl-alpha-D-galactosamine = a 3-O-[N-acetyl-alpha-D-galactosaminyl]-L-seryl-[protein] + UDP + H(+). The catalysed reaction is L-threonyl-[protein] + UDP-N-acetyl-alpha-D-galactosamine = a 3-O-[N-acetyl-alpha-D-galactosaminyl]-L-threonyl-[protein] + UDP + H(+). It participates in protein modification; protein glycosylation. Functionally, may catalyze the initial reaction in O-linked oligosaccharide biosynthesis, the transfer of an N-acetyl-D-galactosamine residue to a serine or threonine residue on the protein receptor. In Drosophila melanogaster (Fruit fly), this protein is Putative polypeptide N-acetylgalactosaminyltransferase 13 (pgant13).